A 1580-amino-acid chain; its full sequence is Collagen alpha-1(XVI) chain (1580 aa).

An N-terminal signal peptide occupies residues 1 to 21 (MLTSWAPGLWVLGLWATFSHG). A glycan (N-linked (GlcNAc...) asparagine) is linked at Asn-47. Residues 50–231 (GFNLIRRLNL…LQQAHIYCDP (182 aa)) enclose the Laminin G-like domain. The interval 232 to 374 (ELVLEEGCCE…SPDAPLQCVE (143 aa)) is nonhelical region 10 (NC10). Residues 324–547 (RESNVTLGPS…DPAPAWEGLG (224 aa)) form a disordered region. The N-linked (GlcNAc...) asparagine glycan is linked to Asn-327. The region spanning 375-424 (GPKGEKGESGDLGPPGLPGPTGQKGQKGEKGDGGLKGLPGKPGRDGRPGE) is the Collagen-like 1 domain. The triple-helical region 9 (COL9) with 3 imperfections stretch occupies residues 375 to 509 (GPKGEKGESG…PGTKGEKGDP (135 aa)). Residues 449–460 (PGPPGLPGPPGI) show a composition bias toward pro residues. The segment covering 486–495 (GKEGPGGKPG) has biased composition (gly residues). The nonhelical region 9 (NC9) stretch occupies residues 510-524 (CEVCPTLPEGSQNFV). A triple-helical region 8 (COL8) with 1 imperfection region spans residues 525 to 570 (GLPGKPGPKGEPGDPAPAWEGLGTVGLKGDRGDPGIQGMKGEKGEP). Positions 555–557 (RGD) match the Cell attachment site motif. Residues 571-586 (CSSCSSGVGAQHLGPS) are nonhelical region 8 (NC8). Residues 585–598 (PSPGHGLPGLPGTS) are compositionally biased toward low complexity. The interval 585–935 (PSPGHGLPGL…LPGQPGLTAE (351 aa)) is disordered. The segment at 587 to 640 (PGHGLPGLPGTSGIPGPRGLKGEKGSFGDTGPAGVPGSPGPVGPAGIKGAKGEP) is triple-helical region 7 (COL7) with 1 imperfection. Collagen-like domains lie at 590–643 (GLPG…PCEP) and 676–725 (GLPG…PAGP). Residues 641-661 (CEPCTALSELQDGDMRVVHLP) are nonhelical region 7 (NC7). Residues 662-732 (GPAGEKGEPG…AGPKGEKGDG (71 aa)) form a triple-helical region 6 (COL6) with 1 imperfection region. Basic and acidic residues predominate over residues 683 to 693 (KAGERGLKGQK). Residues 698 to 714 (NPGDPGTPGITGQPGIS) are compositionally biased toward low complexity. Positions 733–747 (CTACPSLQGALTDVS) are nonhelical region 6 (NC6). The interval 748–870 (GLPGKPGPKG…RGEKGEPGEC (123 aa)) is triple-helical region 5 (COL5) with 3 imperfections. One can recognise a Collagen-like 4 domain in the interval 797-848 (GAEGPQGEPGTQGLPGTQGLPGPRGPPGSAGEKGAQGSPGPKGAIGPMGPPG). Residues 801–817 (PQGEPGTQGLPGTQGLP) are compositionally biased toward low complexity. The tract at residues 871-881 (SCPSRGEPIFS) is nonhelical region 5 (NC5). Residues 882–933 (GMPGAPGLWMGSSSQPGPQGPPGVPGPPGPPGMPGLQGVPGHNGLPGQPGLT) are triple-helical region 4 (COL4) with 2 imperfections. A compositionally biased stretch (pro residues) spans 899–914 (PQGPPGVPGPPGPPGM). A nonhelical region 4 (NC4) region spans residues 934–967 (AELGSLPIEKHLLKSICGDCAQGQTAHPAFLLEK). The tract at residues 968-982 (GEKGDQGIPGVPGFD) is triple-helical region 3 (COL3). The tract at residues 983–1005 (NCARCFIERERPRAEEARGDNSE) is nonhelical region 3 (NC3). Disordered stretches follow at residues 995-1405 (RAEE…LPGS) and 1445-1523 (AAAP…GYGK). Positions 1000 to 1002 (RGD) match the Cell attachment site motif. The 58-residue stretch at 1006-1063 (GEPGCSGSPGLPGPPGMPGQRGEEGPPGMRGSPGPPGPIGLQGERGLTGLTGDKGEPG) folds into the Collagen-like 5 domain. The segment at 1006 to 1409 (GEPGCSGSPG…PGLPGSMGDM (404 aa)) is triple-helical region 2 (COL2) with 2 imperfections. Low complexity predominate over residues 1098–1107 (SGPPGSEGLP). 2 stretches are compositionally biased toward pro residues: residues 1139 to 1148 (FPGPPGPPGF) and 1178 to 1187 (SPGPPGPPGI). Positions 1196 to 1205 (LDGKDGKPGL) are enriched in basic and acidic residues. The short motif at 1206 to 1208 (RGD) is the Cell attachment site element. The Collagen-like 6 domain occupies 1210–1263 (GPAGPPGLMGPPGFKGKTGHPGLPGPKGDCGKPGPPGSSGRPGAEGEPGAMGPQ). The segment covering 1247–1263 (SSGRPGAEGEPGAMGPQ) has biased composition (low complexity). The span at 1265–1281 (RPGPPGHLGPPGQPGPP) shows a compositional bias: pro residues. Collagen-like domains are found at residues 1350 to 1407 (GQKG…GSMG), 1448 to 1500 (PGRP…GDIG), and 1504 to 1552 (AGEN…GKAG). Residues 1362–1371 (GMPGGPGKSG) show a composition bias toward gly residues. Residues 1396–1405 (NPGLPGLPGS) are compositionally biased toward low complexity. The nonhelical region 2 (NC2) stretch occupies residues 1410 to 1448 (VNYDDIKRFIRQEIIKLFDERMAYYTSRMQFPMEVAAAP). Residues 1449 to 1554 (GRPGPPGKDG…MGQPGKAGHC (106 aa)) are triple-helical region 1 (COL1) with 2 imperfections. The segment at 1555–1580 (NPSDCFGAMPMEQQYPPMKSMKGPFG) is nonhelical region 1 (NC1).

It belongs to the fibril-associated collagens with interrupted helices (FACIT) family. In terms of assembly, homotrimer. Interacts with FBN1, fibronectin and integrins ITGA1/ITGB1 and ITGA2/ITGB1. Integrin ITGA1/ITGB1 binds to a unique site within COL16A1 located close to its C-terminal end between collagenous domains COL1-COL3. In terms of processing, prolines at the third position of the tripeptide repeating unit (G-X-Y) are hydroxylated in some or all of the chains. Post-translationally, glycosylated. As to expression, expressed in most tissues examined with highest levels of expression observed in heart. Strongly expressed in cortical and medullar regions of kidney and more weakly expressed in lung. Also detected in the ciliary muscle of the eye, on the serosa layer lining the muscularis externa of intestinal tissue, and in the perimysium membrane lining both the cardiac muscle bundle and the smooth muscle tissue of the small intestine. Strongly stained in particulate or granular structures. Not detected in brain or skeletal muscle.

The protein localises to the secreted. It is found in the extracellular space. Its subcellular location is the extracellular matrix. In terms of biological role, involved in mediating cell attachment and inducing integrin-mediated cellular reactions, such as cell spreading and alterations in cell morphology. The protein is Collagen alpha-1(XVI) chain of Mus musculus (Mouse).